A 329-amino-acid polypeptide reads, in one-letter code: tRNA dimethylallyltransferase (329 aa).

12-19 (GPTSVGKT) is an ATP binding site. 14–19 (TSVGKT) is a substrate binding site. The tract at residues 37–40 (DSRY) is interaction with substrate tRNA. Residues 306 to 329 (LREESDEGDVAVHQSGGGKEAPRA) are disordered. Residues 320-329 (SGGGKEAPRA) are compositionally biased toward gly residues.

It belongs to the IPP transferase family. As to quaternary structure, monomer. It depends on Mg(2+) as a cofactor.

The enzyme catalyses adenosine(37) in tRNA + dimethylallyl diphosphate = N(6)-dimethylallyladenosine(37) in tRNA + diphosphate. In terms of biological role, catalyzes the transfer of a dimethylallyl group onto the adenine at position 37 in tRNAs that read codons beginning with uridine, leading to the formation of N6-(dimethylallyl)adenosine (i(6)A). The sequence is that of tRNA dimethylallyltransferase from Thermomicrobium roseum (strain ATCC 27502 / DSM 5159 / P-2).